The chain runs to 303 residues: Protoheme IX farnesyltransferase (303 aa).

6 consecutive transmembrane segments (helical) span residues 25-45 (MGLV…AIVM), 54-74 (IPQI…ACAL), 118-138 (CLFL…VGYV), 166-186 (IGWV…FLVV), 230-250 (LVLL…FVVI), and 280-300 (FVYS…VSLI).

Belongs to the UbiA prenyltransferase family. Protoheme IX farnesyltransferase subfamily. As to quaternary structure, interacts with CtaA.

The protein resides in the cell membrane. The enzyme catalyses heme b + (2E,6E)-farnesyl diphosphate + H2O = Fe(II)-heme o + diphosphate. The protein operates within porphyrin-containing compound metabolism; heme O biosynthesis; heme O from protoheme: step 1/1. Functionally, converts heme B (protoheme IX) to heme O by substitution of the vinyl group on carbon 2 of heme B porphyrin ring with a hydroxyethyl farnesyl side group. This chain is Protoheme IX farnesyltransferase, found in Staphylococcus epidermidis (strain ATCC 35984 / DSM 28319 / BCRC 17069 / CCUG 31568 / BM 3577 / RP62A).